A 95-amino-acid polypeptide reads, in one-letter code: DNA-directed RNA polymerase subunit Rpo11 (95 aa).

The protein belongs to the archaeal Rpo11/eukaryotic RPB11/RPC19 RNA polymerase subunit family. In terms of assembly, part of the RNA polymerase complex.

Its subcellular location is the cytoplasm. The enzyme catalyses RNA(n) + a ribonucleoside 5'-triphosphate = RNA(n+1) + diphosphate. Functionally, DNA-dependent RNA polymerase (RNAP) catalyzes the transcription of DNA into RNA using the four ribonucleoside triphosphates as substrates. The polypeptide is DNA-directed RNA polymerase subunit Rpo11 (Pyrococcus furiosus (strain ATCC 43587 / DSM 3638 / JCM 8422 / Vc1)).